A 165-amino-acid polypeptide reads, in one-letter code: Neurotrophin-3 (165 aa).

Positions 1–3 (IQS) are cleaved as a signal peptide. Residues 4 to 119 (TSMDQGSLSE…VLTXTSXXXR (116 aa)) constitute a propeptide that is removed on maturation.

Belongs to the NGF-beta family.

The protein resides in the secreted. Its function is as follows. Seems to promote the survival of visceral and proprioceptive sensory neurons. The chain is Neurotrophin-3 (NTF3) from Tropidophis haetianus (Haitian dwarf boa).